A 671-amino-acid polypeptide reads, in one-letter code: DNA ligase (671 aa).

Residues 31 to 35, 80 to 81, and Glu-110 contribute to the NAD(+) site; these read DAEYD and SL. The active-site N6-AMP-lysine intermediate is the Lys-112. NAD(+)-binding residues include Arg-133, Glu-167, Lys-283, and Lys-307. Residues Cys-401, Cys-404, Cys-419, and Cys-424 each coordinate Zn(2+). In terms of domain architecture, BRCT spans 587–671; it reads EEELVFAGKT…YLPDEGGLNE (85 aa).

The protein belongs to the NAD-dependent DNA ligase family. LigA subfamily. It depends on Mg(2+) as a cofactor. The cofactor is Mn(2+).

It carries out the reaction NAD(+) + (deoxyribonucleotide)n-3'-hydroxyl + 5'-phospho-(deoxyribonucleotide)m = (deoxyribonucleotide)n+m + AMP + beta-nicotinamide D-nucleotide.. Its function is as follows. DNA ligase that catalyzes the formation of phosphodiester linkages between 5'-phosphoryl and 3'-hydroxyl groups in double-stranded DNA using NAD as a coenzyme and as the energy source for the reaction. It is essential for DNA replication and repair of damaged DNA. The chain is DNA ligase from Listeria monocytogenes serotype 4b (strain CLIP80459).